An 87-amino-acid chain; its full sequence is Small ribosomal subunit protein bS20 (87 aa).

A disordered region spans residues 1–22 (MANSAQARKRARQSVKQRAHNA). Basic residues predominate over residues 7-19 (ARKRARQSVKQRA).

Belongs to the bacterial ribosomal protein bS20 family.

Its function is as follows. Binds directly to 16S ribosomal RNA. The chain is Small ribosomal subunit protein bS20 from Neisseria gonorrhoeae (strain ATCC 700825 / FA 1090).